The chain runs to 397 residues: Staphylopine export protein (397 aa).

12 helical membrane-spanning segments follow: residues 12–32 (LYIL…FIPL), 38–58 (GATN…AMVF), 77–97 (IILI…LEGY), 102–122 (VMQG…IIDA), 134–154 (LYSL…VGIW), 158–178 (NISL…FFGY), 217–237 (GIIM…VPLY), 239–259 (VSLG…AVVA), 285–305 (LLVI…IIFY), 309–329 (ILIG…LSFV), 337–357 (MLLG…GALM), and 363–383 (LVGF…IMIM).

The protein belongs to the major facilitator superfamily.

It localises to the cell membrane. Involved in the export of the metallophore staphylopine. This is Staphylopine export protein from Staphylococcus aureus (strain Mu50 / ATCC 700699).